A 211-amino-acid polypeptide reads, in one-letter code: 3-demethoxyubiquinol 3-hydroxylase (211 aa).

Positions 22–43 (KHPLNPNRKSPSANTVDGQLSD) are disordered. Positions 28–42 (NRKSPSANTVDGQLS) are enriched in polar residues. 6 residues coordinate Fe cation: Glu60, Glu90, His93, Glu142, Glu174, and His177.

This sequence belongs to the COQ7 family. Requires Fe cation as cofactor.

Its subcellular location is the cell membrane. It carries out the reaction a 5-methoxy-2-methyl-3-(all-trans-polyprenyl)benzene-1,4-diol + AH2 + O2 = a 3-demethylubiquinol + A + H2O. It functions in the pathway cofactor biosynthesis; ubiquinone biosynthesis. Catalyzes the hydroxylation of 2-nonaprenyl-3-methyl-6-methoxy-1,4-benzoquinol during ubiquinone biosynthesis. The polypeptide is 3-demethoxyubiquinol 3-hydroxylase (Francisella philomiragia subsp. philomiragia (strain ATCC 25017 / CCUG 19701 / FSC 153 / O#319-036)).